The following is a 226-amino-acid chain: uncharacterized protein (226 aa).

This is an uncharacterized protein from Caenorhabditis elegans.